The sequence spans 181 residues: Adenylyl-sulfate kinase (181 aa).

13-20 (GVSGAGKS) contributes to the ATP binding site. Ser-87 (phosphoserine intermediate) is an active-site residue.

This sequence belongs to the APS kinase family.

It catalyses the reaction adenosine 5'-phosphosulfate + ATP = 3'-phosphoadenylyl sulfate + ADP + H(+). Its pathway is sulfur metabolism; hydrogen sulfide biosynthesis; sulfite from sulfate: step 2/3. In terms of biological role, catalyzes the synthesis of activated sulfate. This is Adenylyl-sulfate kinase from Burkholderia ambifaria (strain ATCC BAA-244 / DSM 16087 / CCUG 44356 / LMG 19182 / AMMD) (Burkholderia cepacia (strain AMMD)).